The primary structure comprises 417 residues: Dibenzothiophene monooxygenase (417 aa).

Residues Y96, N129 to N134, K159 to S163, R282, A369 to R370, and H391 contribute to the FMN site. The tract at residues S131–K142 is lid loop.

The protein belongs to the DszC flavin monooxygenase family. Homotetramer. Homodimer. FAD is required as a cofactor. It depends on NADH as a cofactor.

The protein resides in the cytoplasm. It catalyses the reaction dibenzothiophene + 2 FMNH2 + 2 O2 = dibenzothiophene 5,5-dioxide + 2 FMN + 2 H2O + 2 H(+). The catalysed reaction is dibenzothiophene + FMNH2 + O2 = dibenzothiophene 5-oxide + FMN + H2O + H(+). It carries out the reaction dibenzothiophene 5-oxide + FMNH2 + O2 = dibenzothiophene 5,5-dioxide + FMN + H2O + H(+). It functions in the pathway sulfur metabolism; dibenzothiophene degradation. Catalyzes the first step of the '4S' desulfurization pathway that removes covalently bound sulfur from dibenzothiophene (DBT) without breaking carbon-carbon bonds. Sulfur dioxygenase which converts DBT to DBT-sulfone (DBTO2 or DBT 5,5-dioxide) in a stepwise manner. In DBTO (dibenzothiophene-5-oxide) was reported not to be a substrate, in it is reported to be a substrate. Can also use benzyl sulfide and benzyl sulfoxide as substrates, although benzyl sulfoxide is a poor substrate. The pathway substrate specificity has been augmented using mutagenesis, however no mutations allowed use of alkylated thiophenes. The sequence is that of Dibenzothiophene monooxygenase from Rhodococcus qingshengii.